Reading from the N-terminus, the 384-residue chain is Succinyl-diaminopimelate desuccinylase (384 aa).

His-69 provides a ligand contact to Zn(2+). Asp-71 is a catalytic residue. Zn(2+) is bound at residue Asp-103. Glu-137 acts as the Proton acceptor in catalysis. Zn(2+)-binding residues include Glu-138, Glu-166, and His-355.

The protein belongs to the peptidase M20A family. DapE subfamily. Homodimer. Zn(2+) is required as a cofactor. Requires Co(2+) as cofactor.

The catalysed reaction is N-succinyl-(2S,6S)-2,6-diaminopimelate + H2O = (2S,6S)-2,6-diaminopimelate + succinate. Its pathway is amino-acid biosynthesis; L-lysine biosynthesis via DAP pathway; LL-2,6-diaminopimelate from (S)-tetrahydrodipicolinate (succinylase route): step 3/3. Functionally, catalyzes the hydrolysis of N-succinyl-L,L-diaminopimelic acid (SDAP), forming succinate and LL-2,6-diaminopimelate (DAP), an intermediate involved in the bacterial biosynthesis of lysine and meso-diaminopimelic acid, an essential component of bacterial cell walls. The polypeptide is Succinyl-diaminopimelate desuccinylase (Rickettsia canadensis (strain McKiel)).